Consider the following 431-residue polypeptide: MCRTLIDGPVRSAIAKVRQIDTTSSTPAAARRVTSPPARETRAAVLLLVLSVGARLAWTYLAPNGANFVDLHVYVSGAASLDHPGTLYGYVYADQTPDFPLPFTYPPFAAVVFYPLHLVPFGLIALLWQVVTMAALYGAVRISQRLMGGTAETGHFAAMLWTAIAIWIEPLRSTFDYGQINVLLMLAALWAVYTPRWWLSGLLVGVASGVKLTPAITAVYLVGVRRLHAAAFSVVVFLATVGVSLLVVGDEARYYFTDLLGDAGRVGPIATSFNQSWRGAISRILGHDAGFGPLVLAAIASTAVLAILAWRALDRSDRLGKLLVVELFGLLLSPISWTHHWVWLVPLMIWLIDGPARERPGARILGWGWLVLTIVGVPWLLSFAQPSIWQIGRPWYLAWAGLVYVVATLATLGWIAASERYVRIRPRRMAN.

10 consecutive transmembrane segments (helical) span residues 43 to 63, 108 to 128, 148 to 168, 175 to 195, 202 to 222, 229 to 249, 290 to 310, 332 to 352, 364 to 384, and 397 to 417; these read AAVLLLVLSVGARLAWTYLAP, FAAVVFYPLHLVPFGLIALLW, GGTAETGHFAAMLWTAIAIWI, FDYGQINVLLMLAALWAVYTP, LLVGVASGVKLTPAITAVYLV, AAAFSVVVFLATVGVSLLVVG, GFGPLVLAAIASTAVLAILAW, LSPISWTHHWVWLVPLMIWLI, ILGWGWLVLTIVGVPWLLSFA, and LAWAGLVYVVATLATLGWIAA.

This sequence belongs to the glycosyltransferase 87 family.

The protein resides in the cell membrane. It functions in the pathway phospholipid metabolism; phosphatidylinositol metabolism. Catalyzes the alpha-1,2 addition of a mannose residue from polyprenol-phosphate-mannose (PPM) to a monoacyl phosphatidylinositol tetramannoside (AcPIM4) to generate a monoacyl phosphatidylinositol pentamannoside (AcPIM5). In Mycobacterium tuberculosis (strain CDC 1551 / Oshkosh), this protein is Polyprenol-phosphate-mannose-dependent alpha-(1-2)-phosphatidylinositol pentamannoside mannosyltransferase (pimE).